A 199-amino-acid chain; its full sequence is MSEYSNRSQAGADYEWHYEYYEDEEPVSFEGLRANRYSIVIGFWVGLAVFVIFMFFVLTLLTKTGAPHPEMCDASMKPHVLIGCELEVGGSLAFSLPPLPDQSRSLFHFYIHKEERVKTHKDAVIGRGMHCGRGNAERADEDEHFMSSFNIPNFVNSEQSSSLGHDDFLLSEPPIITDGQSDELKTAEPAHLCYDIIRH.

N-linked (GlcNAc...) asparagine glycosylation occurs at N6. The chain crosses the membrane as a helical span at residues I39–T59.

The protein belongs to the MRAP family. Interacts with mc4r. Expressed in adult brain.

Its subcellular location is the cell membrane. It localises to the endoplasmic reticulum membrane. In terms of biological role, activator of melanocortin receptor 4 (mc4r), a receptor involved in energy homeostasis. Plays a role after larval development in the control of energy homeostasis and body weight regulation by increasing ligand-sensitivity of mc4r and mc4r-mediated generation of cAMP once the zebrafish begins feeding, increasing the capacity for regulated feeding and growth. This Danio rerio (Zebrafish) protein is Melanocortin-2 receptor accessory protein 2B (mrap2b).